A 248-amino-acid chain; its full sequence is Aspartate/glutamate leucyltransferase (248 aa).

It belongs to the R-transferase family. Bpt subfamily.

Its subcellular location is the cytoplasm. It catalyses the reaction N-terminal L-glutamyl-[protein] + L-leucyl-tRNA(Leu) = N-terminal L-leucyl-L-glutamyl-[protein] + tRNA(Leu) + H(+). The enzyme catalyses N-terminal L-aspartyl-[protein] + L-leucyl-tRNA(Leu) = N-terminal L-leucyl-L-aspartyl-[protein] + tRNA(Leu) + H(+). In terms of biological role, functions in the N-end rule pathway of protein degradation where it conjugates Leu from its aminoacyl-tRNA to the N-termini of proteins containing an N-terminal aspartate or glutamate. This Methylorubrum extorquens (strain PA1) (Methylobacterium extorquens) protein is Aspartate/glutamate leucyltransferase.